We begin with the raw amino-acid sequence, 459 residues long: MLKIYNTLKREKEEFKPINPNQVGMYVCGVTVYDLCHFGHGRTFVSFDVIARYLRYLGYNLRYVRNITDVDDKIIKRALENNETCDQLVDRMIAEMHKDFDDLNILRPDVEPRATKHIPEIVAMVEKLIANGHAYVAADGDVMFDVESFKKYGALSRQNLEQLQAGARVEIKSVKKNPMDFVLWKMSKEGEPSWQSPWGNGRPGWHIECSAMNSKELGEHFDIHGGGSDLMFPHHENEIAQSCCAHGGDYVNYWLHTGMLTIDDEKMSKSLGNFFTIRTMLEKYESETLRYFFLTAHYRSLLNYSLDNLDLARSALERLYTSLRGCDLSVEVAGGEQYVEAFKAAMDDDFNTPGALAVLFEIAREVNKLKTEDMAKANGLAVRLKELAGVLGLLYQDPEAFLQGDADNDEVAEIEALIKQRNEAKAAKNWAVADEVRDKLKAMNIVLEDTPNGTTWRKA.

C28 is a Zn(2+) binding site. The 'HIGH' region signature appears at 30–40 (VTVYDLCHFGH). Zn(2+)-binding residues include C209, H234, and E238. Positions 266 to 270 (KMSKS) match the 'KMSKS' region motif. K269 lines the ATP pocket.

Belongs to the class-I aminoacyl-tRNA synthetase family. Monomer. It depends on Zn(2+) as a cofactor.

Its subcellular location is the cytoplasm. It carries out the reaction tRNA(Cys) + L-cysteine + ATP = L-cysteinyl-tRNA(Cys) + AMP + diphosphate. In Actinobacillus pleuropneumoniae serotype 5b (strain L20), this protein is Cysteine--tRNA ligase.